Reading from the N-terminus, the 446-residue chain is Exodeoxyribonuclease 7 large subunit (446 aa).

This sequence belongs to the XseA family. Heterooligomer composed of large and small subunits.

The protein localises to the cytoplasm. It carries out the reaction Exonucleolytic cleavage in either 5'- to 3'- or 3'- to 5'-direction to yield nucleoside 5'-phosphates.. In terms of biological role, bidirectionally degrades single-stranded DNA into large acid-insoluble oligonucleotides, which are then degraded further into small acid-soluble oligonucleotides. This chain is Exodeoxyribonuclease 7 large subunit, found in Streptococcus agalactiae serotype Ia (strain ATCC 27591 / A909 / CDC SS700).